The sequence spans 719 residues: Polyphosphate kinase (719 aa).

ATP is bound at residue N54. The Mg(2+) site is built by R379 and R409. Positions 434–468 constitute a PLD phosphodiesterase domain; the sequence is THLKTHSKIALVVKRMNNKLTSFIHLGTGNYNDKT. Catalysis depends on H439, which acts as the Phosphohistidine intermediate. 3 residues coordinate ATP: Y472, R568, and H596.

Belongs to the polyphosphate kinase 1 (PPK1) family. Mg(2+) is required as a cofactor. Post-translationally, an intermediate of this reaction is the autophosphorylated ppk in which a phosphate is covalently linked to a histidine residue through a N-P bond.

It carries out the reaction [phosphate](n) + ATP = [phosphate](n+1) + ADP. In terms of biological role, catalyzes the reversible transfer of the terminal phosphate of ATP to form a long-chain polyphosphate (polyP). This chain is Polyphosphate kinase, found in Staphylococcus saprophyticus subsp. saprophyticus (strain ATCC 15305 / DSM 20229 / NCIMB 8711 / NCTC 7292 / S-41).